The chain runs to 233 residues: Ras-related protein Rab-20 (233 aa).

Positions 17, 18, 19, 32, and 36 each coordinate GTP. Position 19 (Thr19) interacts with Mg(2+). 2 consecutive short sequence motifs (switch) follow at residues 28-41 and 55-72; these read RRFP…GGAF and DTAG…YCRG. Mg(2+) contacts are provided by Thr36 and Asp55. Residues Gly58, Asn113, Lys114, and Asp116 each contribute to the GTP site. Over residues 119-130 the composition is skewed to basic and acidic residues; it reads SERDTEGGEKEG. The disordered stretch occupies residues 119–138; it reads SERDTEGGEKEGPASGKVGS. 2 residues coordinate GTP: Ala183 and Lys184. S-geranylgeranyl cysteine attachment occurs at residues Cys231 and Cys232.

It belongs to the small GTPase superfamily. Rab family. Requires Mg(2+) as cofactor. In terms of tissue distribution, present in a variety of tissues, but not in brain.

It is found in the cytoplasmic vesicle. Its subcellular location is the phagosome. The protein localises to the phagosome membrane. The protein resides in the golgi apparatus. The enzyme catalyses GTP + H2O = GDP + phosphate + H(+). Regulated by guanine nucleotide exchange factors (GEFs) which promote the exchange of bound GDP for free GTP. Regulated by GTPase activating proteins (GAPs) which increase the GTP hydrolysis activity. Inhibited by GDP dissociation inhibitors (GDIs). In terms of biological role, plays a role in apical endocytosis/recycling. Plays a role in the maturation and acidification of phagosomes that engulf pathogens, such as S.aureus and Mycobacterium. Plays a role in the fusion of phagosomes with lysosomes. The polypeptide is Ras-related protein Rab-20 (Mus musculus (Mouse)).